We begin with the raw amino-acid sequence, 417 residues long: Ribonuclease T2-like (417 aa).

Residues 1-22 form the signal peptide; it reads MSSISGFLGAIPGAQQILQTMA. Disulfide bonds link cysteine 45-cysteine 63, cysteine 52-cysteine 99, cysteine 62-cysteine 165, cysteine 107-cysteine 157, and cysteine 229-cysteine 264. Residue histidine 92 is part of the active site. The N-linked (GlcNAc...) asparagine glycan is linked to asparagine 115. Active-site residues include glutamate 150 and histidine 154. The tract at residues 274-296 is disordered; that stretch reads KTPNKDPGHGHEPTKTRHPHGPT. Residues 276–288 are compositionally biased toward basic and acidic residues; sequence PNKDPGHGHEPTK. Asparagine 383 carries N-linked (GlcNAc...) asparagine glycosylation.

This sequence belongs to the RNase T2 family.

The protein localises to the vacuole lumen. The protein resides in the cytoplasm. The enzyme catalyses a ribonucleotidyl-ribonucleotide-RNA + H2O = a 3'-end 3'-phospho-ribonucleotide-RNA + a 5'-end dephospho-ribonucleoside-RNA + H(+). Rnase which modulates cell survival under stress conditions. Released from the vacuole to the cytoplasm during stress to promote tRNA and rRNA cleavage and to activate separately a downstream pathway that promotes cell death. Involved in cell size, vacuolar morphology and growth at high temperatures and high salt concentration. This Emericella nidulans (strain FGSC A4 / ATCC 38163 / CBS 112.46 / NRRL 194 / M139) (Aspergillus nidulans) protein is Ribonuclease T2-like (rny1).